A 31-amino-acid polypeptide reads, in one-letter code: Jingzhaotoxin F7-15.33 (31 aa).

Cystine bridges form between Cys-2/Cys-16, Cys-9/Cys-21, and Cys-15/Cys-28.

The protein belongs to the neurotoxin 10 (Hwtx-1) family. As to expression, expressed by the venom gland.

It is found in the secreted. In terms of biological role, probable ion channel inhibitor. In Chilobrachys guangxiensis (Chinese earth tiger tarantula), this protein is Jingzhaotoxin F7-15.33.